The chain runs to 1104 residues: Lon protease homolog, mitochondrial (1104 aa).

The N-terminal 54 residues, 1–54 (MLRGQTLRWRAALQTPRSLILRPLFAPGGYNVGPRSVLETSRRFRSLPPSLRTF), are a transit peptide targeting the mitochondrion. Disordered regions lie at residues 41–192 (SRRF…KPSV) and 296–317 (SLIPPGDSTKSGNSEDKTTEKR). Composition is skewed to basic and acidic residues over residues 64–104 (KPPP…DSSG) and 125–144 (KAADRDQRSVTEDAKREAEA). Positions 158-169 (SDSSSESKPSGS) are enriched in low complexity. Basic and acidic residues-rich tracts occupy residues 172–187 (GGDDGGKKGKKNDKAL) and 308–317 (NSEDKTTEKR). In terms of domain architecture, Lon N-terminal spans 199-451 (VMAIPIAKRP…KGLVVLKKEL (253 aa)). 604–611 (GPPGVGKT) is a binding site for ATP. Over residues 825-839 (AEGKAAQEESEKETG) the composition is skewed to basic and acidic residues. Positions 825 to 857 (AEGKAAQEESEKETGPIESTSEQEKATTENPRV) are disordered. One can recognise a Lon proteolytic domain in the interval 891–1077 (TFPPGVTMGL…SEVFDILFAD (187 aa)). Residues Ser-983 and Lys-1026 contribute to the active site.

The protein belongs to the peptidase S16 family. In terms of assembly, homohexamer or homoheptamer. Organized in a ring with a central cavity.

It localises to the mitochondrion matrix. The enzyme catalyses Hydrolysis of proteins in presence of ATP.. Functionally, ATP-dependent serine protease that mediates the selective degradation of misfolded, unassembled or oxidatively damaged polypeptides as well as certain short-lived regulatory proteins in the mitochondrial matrix. May also have a chaperone function in the assembly of inner membrane protein complexes. Participates in the regulation of mitochondrial gene expression and in the maintenance of the integrity of the mitochondrial genome. Binds to mitochondrial DNA in a site-specific manner. The sequence is that of Lon protease homolog, mitochondrial (pim1) from Emericella nidulans (strain FGSC A4 / ATCC 38163 / CBS 112.46 / NRRL 194 / M139) (Aspergillus nidulans).